We begin with the raw amino-acid sequence, 120 residues long: Large ribosomal subunit protein uL29 (120 aa).

Belongs to the universal ribosomal protein uL29 family. Component of the large ribosomal subunit. Mature ribosomes consist of a small (40S) and a large (60S) subunit. The 40S subunit contains about 32 different proteins and 1 molecule of RNA (18S). The 60S subunit contains 45 different proteins and 3 molecules of RNA (25S, 5.8S and 5S).

Its subcellular location is the cytoplasm. Functionally, component of the ribosome, a large ribonucleoprotein complex responsible for the synthesis of proteins in the cell. The small ribosomal subunit (SSU) binds messenger RNAs (mRNAs) and translates the encoded message by selecting cognate aminoacyl-transfer RNA (tRNA) molecules. The large subunit (LSU) contains the ribosomal catalytic site termed the peptidyl transferase center (PTC), which catalyzes the formation of peptide bonds, thereby polymerizing the amino acids delivered by tRNAs into a polypeptide chain. The nascent polypeptides leave the ribosome through a tunnel in the LSU and interact with protein factors that function in enzymatic processing, targeting, and the membrane insertion of nascent chains at the exit of the ribosomal tunnel. This is Large ribosomal subunit protein uL29 from Candida albicans (strain SC5314 / ATCC MYA-2876) (Yeast).